We begin with the raw amino-acid sequence, 975 residues long: Homeobox protein cut-like 1 (975 aa).

Residues 1–73 (SRQVKEQLIK…ILALRSIQGR (73 aa)) constitute a DNA-binding region (CUT 1). Disordered stretches follow at residues 90-113 (PKRR…GSDE) and 126-148 (LQVQ…TSDD). A coiled-coil region spans residues 113-169 (EAIKSILEQAKRELQVQKTAEPAQPSSTSSSGTSDDAIRSILQQARREMEAQQAALD). Ser207 is modified (phosphoserine). Positions 209 to 246 (KKPPTAPDTSASTLPNPPALKKESQDAPGLDLPGAAES) are disordered. Glycyl lysine isopeptide (Lys-Gly) (interchain with G-Cter in SUMO2) cross-links involve residues Lys229, Lys255, and Lys286. Positions 262 to 297 (GVWKDHWWSTVQPERKSAAPPEDAKSEEAGGTKEKG) are enriched in basic and acidic residues. The segment at 262–369 (GVWKDHWWST…SKPAKPSVPP (108 aa)) is disordered. Positions 328 to 351 (RTPQSSELSLTGASRSETPQNSPL) are enriched in polar residues. Phosphoserine is present on Ser349. A DNA-binding region (CUT 2) is located at residues 374–461 (QYEIYMYQEV…QGVLPVQGQQ (88 aa)). Positions 476–489 (LQQGCVSSESTPKT) are enriched in polar residues. Positions 476-549 (LQQGCVSSES…SQPATPLPLS (74 aa)) are disordered. A compositionally biased stretch (low complexity) spans 490–506 (SASCSPAPESPMSSSES). A phosphoserine mark is found at Ser499 and Ser509. Residues 557 to 644 (QELVAMSPEL…VEKLMDMKRM (88 aa)) constitute a DNA-binding region (CUT 3). The segment at 652–687 (RRHSSVSDSQPCEPPSVGIDYSQGASPQPQHQLKKP) is disordered. Positions 684-743 (LKKPRVVLAPEEKEALKRAYQQKPYPSPKTIEELATQLNLKTSTVINWFHNYRSRIRREL) form a DNA-binding region, homeobox. A Phosphoserine modification is found at Ser710. Lys724 participates in a covalent cross-link: Glycyl lysine isopeptide (Lys-Gly) (interchain with G-Cter in SUMO2). The disordered stretch occupies residues 752-949 (SQGQAGARHS…DSRDNPLRKK (198 aa)). Residues 756–773 (AGARHSPSARSSGAAPSS) show a composition bias toward low complexity. At Ser777 the chain carries Phosphoserine. A compositionally biased stretch (low complexity) spans 780-813 (GVEAAEGPGAADAEESAPAAAAKSQGGPAEAAVA). Gly residues predominate over residues 838 to 847 (PGRRGGGGPA). The span at 850-860 (APAAPAAAARG) shows a compositional bias: low complexity. The segment covering 861–890 (PSRRPGARAKPRRRRRRRRRHARGGGRRYL) has biased composition (basic residues). Positions 907-929 (RSSALPSTSAPAAARRPSSLQSL) are enriched in low complexity. Ser925 carries the post-translational modification Phosphoserine. The span at 937-946 (GARDSRDNPL) shows a compositional bias: basic and acidic residues. Phosphoserine is present on residues Ser956 and Ser966.

Belongs to the CUT homeobox family. In terms of assembly, interacts with BANP. Post-translationally, as cells progress into S phase, a fraction of CUX1 molecules is proteolytically processed into N-terminally truncated proteins of 110 kDa by CTSL. Cell cycle-dependent processing of CUX1 serves to generate a CDP/Cux p110 with distinct DNA binding and transcriptional properties. Phosphorylated by PKA. In terms of tissue distribution, a broad pattern of expression observed in tissues of diverse origins, such as cartilage, liver, brain, lung, heart and skeletal muscle. There are 2 distinct protein species: the larger one (230-250 kDa) is found mainly in adult brain, lung and heart, and the smaller one (180-190 kDa) predominates in early embryonic tissues.

The protein localises to the nucleus. Functionally, transcription factor involved in the control of neuronal differentiation in the brain. Regulates dendrite development and branching, and dendritic spine formation in cortical layers II-III. Also involved in the control of synaptogenesis. In addition, it has probably a broad role in mammalian development as a repressor of developmentally regulated gene expression. May act by preventing binding of positively-activing CCAAT factors to promoters. Component of nf-munr repressor; binds to the matrix attachment regions (MARs) (5' and 3') of the immunoglobulin heavy chain enhancer. Represses T-cell receptor (TCR) beta enhancer function by binding to MARbeta, an ATC-rich DNA sequence located upstream of the TCR beta enhancer. Binds to the TH enhancer; may require the basic helix-loop-helix protein TCF4 as a coactivator. Its function is as follows. Plays a role in cell cycle progression, in particular at the G1/S transition. As cells progress into S phase, a fraction of CUX1 molecules is proteolytically processed into N-terminally truncated proteins of 110 kDa. While CUX1 only transiently binds to DNA and carries the CCAAT-displacement activity, CDP/Cux p110 makes a stable interaction with DNA and stimulates expression of genes such as POLA1. This is Homeobox protein cut-like 1 (CUX1) from Canis lupus familiaris (Dog).